A 342-amino-acid polypeptide reads, in one-letter code: Protein BMEI1586 (342 aa).

Catalysis depends on serine 90, which acts as the Proton acceptor. Substrate is bound by residues 91–92 (GS), aspartate 251, and 256–257 (GT).

This sequence belongs to the proline racemase family. In terms of assembly, homotetramer.

It catalyses the reaction trans-4-hydroxy-L-proline = cis-4-hydroxy-D-proline. Functionally, in vitro, catalyzes the epimerization of trans-4-hydroxy-L-proline (t4LHyp) to cis-4-hydroxy-D-proline (c4DHyp) and that of trans-3-hydroxy-L-proline (t3LHyp) to cis-3-hydroxy-D-proline (c3DHyp), albeit with very low efficiency. The physiological substrate may be different. Displays neither proline racemase activity nor t3LHyp dehydratase activity. The sequence is that of Protein BMEI1586 from Brucella melitensis biotype 1 (strain ATCC 23456 / CCUG 17765 / NCTC 10094 / 16M).